Reading from the N-terminus, the 423-residue chain is Gamma-glutamyl phosphate reductase (423 aa).

Positions 1-14 are enriched in low complexity; the sequence is MTLQAAPRSAAAQQ. Positions 1 to 25 are disordered; it reads MTLQAAPRSAAAQQREPDLRQEVHD. Over residues 15 to 25 the composition is skewed to basic and acidic residues; sequence REPDLRQEVHD.

The protein belongs to the gamma-glutamyl phosphate reductase family.

The protein localises to the cytoplasm. It carries out the reaction L-glutamate 5-semialdehyde + phosphate + NADP(+) = L-glutamyl 5-phosphate + NADPH + H(+). It functions in the pathway amino-acid biosynthesis; L-proline biosynthesis; L-glutamate 5-semialdehyde from L-glutamate: step 2/2. Its function is as follows. Catalyzes the NADPH-dependent reduction of L-glutamate 5-phosphate into L-glutamate 5-semialdehyde and phosphate. The product spontaneously undergoes cyclization to form 1-pyrroline-5-carboxylate. This chain is Gamma-glutamyl phosphate reductase, found in Mycobacterium ulcerans (strain Agy99).